The following is a 123-amino-acid chain: Immunoglobulin lambda variable 5-45 (123 aa).

The N-terminal stretch at methionine 1 to serine 19 is a signal peptide. The framework-1 stretch occupies residues glutamine 20 to cysteine 44. One can recognise an Ig-like domain in the interval glutamine 20–serine 123. An intrachain disulfide couples cysteine 41 to cysteine 115. A complementarity-determining-1 region spans residues serine 45–arginine 53. Residues isoleucine 54–arginine 70 form a framework-2 region. Residues leucine 68–aspartate 92 are disordered. The complementarity-determining-2 stretch occupies residues tyrosine 71–lysine 77. Polar residues predominate over residues glutamine 78–aspartate 92. The segment at glutamine 78–cysteine 115 is framework-3. Residues methionine 116–serine 123 form a complementarity-determining-3 region.

As to quaternary structure, immunoglobulins are composed of two identical heavy chains and two identical light chains; disulfide-linked.

The protein resides in the secreted. It is found in the cell membrane. Functionally, v region of the variable domain of immunoglobulin light chains that participates in the antigen recognition. Immunoglobulins, also known as antibodies, are membrane-bound or secreted glycoproteins produced by B lymphocytes. In the recognition phase of humoral immunity, the membrane-bound immunoglobulins serve as receptors which, upon binding of a specific antigen, trigger the clonal expansion and differentiation of B lymphocytes into immunoglobulins-secreting plasma cells. Secreted immunoglobulins mediate the effector phase of humoral immunity, which results in the elimination of bound antigens. The antigen binding site is formed by the variable domain of one heavy chain, together with that of its associated light chain. Thus, each immunoglobulin has two antigen binding sites with remarkable affinity for a particular antigen. The variable domains are assembled by a process called V-(D)-J rearrangement and can then be subjected to somatic hypermutations which, after exposure to antigen and selection, allow affinity maturation for a particular antigen. The chain is Immunoglobulin lambda variable 5-45 from Homo sapiens (Human).